We begin with the raw amino-acid sequence, 477 residues long: Glycogen synthase (477 aa).

Lys-15 serves as a coordination point for ADP-alpha-D-glucose.

The protein belongs to the glycosyltransferase 1 family. Bacterial/plant glycogen synthase subfamily.

It catalyses the reaction [(1-&gt;4)-alpha-D-glucosyl](n) + ADP-alpha-D-glucose = [(1-&gt;4)-alpha-D-glucosyl](n+1) + ADP + H(+). It functions in the pathway glycan biosynthesis; glycogen biosynthesis. Functionally, synthesizes alpha-1,4-glucan chains using ADP-glucose. The sequence is that of Glycogen synthase from Streptococcus pneumoniae (strain ATCC 700669 / Spain 23F-1).